A 310-amino-acid polypeptide reads, in one-letter code: p-hydroxybenzoic acid efflux pump subunit AaeA (310 aa).

A helical membrane pass occupies residues Ala-12 to Tyr-32.

The protein belongs to the membrane fusion protein (MFP) (TC 8.A.1) family.

The protein localises to the cell inner membrane. Its function is as follows. Forms an efflux pump with AaeB. This Shigella flexneri protein is p-hydroxybenzoic acid efflux pump subunit AaeA.